A 295-amino-acid polypeptide reads, in one-letter code: Movement protein BC1 (295 aa).

The protein belongs to the begomovirus movement protein BC1 family. In terms of assembly, binds to dimeric supercoiled plasmid DNA. In terms of processing, phosphorylated.

It localises to the host cell membrane. It is found in the host microsome membrane. Its subcellular location is the host endoplasmic reticulum membrane. Transports viral genome to neighboring plant cells directly through plasmosdesmata, without any budding. The movement protein allows efficient cell to cell propagation, by bypassing the host cell wall barrier. Begomovirus genome is shuttled out of nucleus by Nuclear shuttle protein (NSP) and the movement protein transports the DNA-NSP complex to cell plasmodesmata and facilitates further movement across the cell wall. The sequence is that of Movement protein BC1 from Brassica oleracea (Wild cabbage).